The chain runs to 341 residues: 33 kDa chaperonin (341 aa).

2 cysteine pairs are disulfide-bonded: Cys245–Cys247 and Cys278–Cys281.

Belongs to the HSP33 family. Under oxidizing conditions two disulfide bonds are formed involving the reactive cysteines. Under reducing conditions zinc is bound to the reactive cysteines and the protein is inactive.

It is found in the cytoplasm. In terms of biological role, redox regulated molecular chaperone. Protects both thermally unfolding and oxidatively damaged proteins from irreversible aggregation. Plays an important role in the bacterial defense system toward oxidative stress. This is 33 kDa chaperonin from Thermus thermophilus (strain ATCC 27634 / DSM 579 / HB8).